We begin with the raw amino-acid sequence, 68 residues long: Large ribosomal subunit protein bL31 (68 aa).

Zn(2+)-binding residues include C16, C18, C38, and C41.

The protein belongs to the bacterial ribosomal protein bL31 family. Type A subfamily. In terms of assembly, part of the 50S ribosomal subunit. Zn(2+) is required as a cofactor.

Its function is as follows. Binds the 23S rRNA. This Thiobacillus denitrificans (strain ATCC 25259 / T1) protein is Large ribosomal subunit protein bL31.